Here is a 39-residue protein sequence, read N- to C-terminus: Hementin (39 aa).

Requires a divalent metal cation as cofactor. In terms of tissue distribution, expressed mainly in the posterior salivary glands and, to a lesser extent, in the anterior salivary glands and secreted into the proboscis (at protein level).

It is found in the secreted. Inhibited by EDTA, cysteine, DTT and sodium phosphate. Partially inhibited by EGTA, citrate, Tris and glycine. Not inhibited by DFP, PMSF, iodoacetic acid and leupeptin. Requires sodium chloride concentrations higher than 0.15 M for activity. Metalloprotease with anticoagulant activity. Cleaves fibrinogen Aalpha (FGA), gamma (FGG) and Bbeta (FGB) chains after positions 'Asn-121', 'Lys-160' and 'Pro-102', respectively. Breaks down cross-linked and non-cross-linked fibrin clots. Prevents and reverts platelet aggregation induced by ADP and collagen. Prevents thrombin-induced platelet clotting. Does not affect plasma levels of coagulation factors prothrombin (F2), V (F5), VII (F7), VIII (F8), IX (F9), X (F10), XI (F11), XII (F12), plasma kallikrein (KLKB1) and kininogen-1 (KNG1). The protein is Hementin of Haementeria ghilianii (Amazon leech).